The primary structure comprises 390 residues: Elongation factor Tu 2 (390 aa).

The region spanning 10–201 (KPHVNVGTIG…LDDYVEVPPR (192 aa)) is the tr-type G domain. A G1 region spans residues 19–26 (GHVDHGKT). A GTP-binding site is contributed by 19-26 (GHVDHGKT). T26 is a binding site for Mg(2+). Positions 55–59 (GITIA) are G2. A G3 region spans residues 76 to 79 (DCPG). Residues 76 to 80 (DCPGH) and 131 to 134 (NKAD) contribute to the GTP site. The tract at residues 131–134 (NKAD) is G4. The interval 168 to 170 (SAL) is G5.

Belongs to the TRAFAC class translation factor GTPase superfamily. Classic translation factor GTPase family. EF-Tu/EF-1A subfamily. In terms of assembly, monomer.

Its subcellular location is the cytoplasm. It carries out the reaction GTP + H2O = GDP + phosphate + H(+). Functionally, GTP hydrolase that promotes the GTP-dependent binding of aminoacyl-tRNA to the A-site of ribosomes during protein biosynthesis. The chain is Elongation factor Tu 2 from Wolbachia sp. subsp. Brugia malayi (strain TRS).